Consider the following 109-residue polypeptide: Phosphoribosyl-ATP pyrophosphatase (109 aa).

It belongs to the PRA-PH family.

The protein resides in the cytoplasm. The enzyme catalyses 1-(5-phospho-beta-D-ribosyl)-ATP + H2O = 1-(5-phospho-beta-D-ribosyl)-5'-AMP + diphosphate + H(+). Its pathway is amino-acid biosynthesis; L-histidine biosynthesis; L-histidine from 5-phospho-alpha-D-ribose 1-diphosphate: step 2/9. The polypeptide is Phosphoribosyl-ATP pyrophosphatase (Geobacter metallireducens (strain ATCC 53774 / DSM 7210 / GS-15)).